A 345-amino-acid polypeptide reads, in one-letter code: Protein RecA (345 aa).

Residue glycine 81–threonine 88 coordinates ATP.

Belongs to the RecA family.

Its subcellular location is the cytoplasm. Its function is as follows. Can catalyze the hydrolysis of ATP in the presence of single-stranded DNA, the ATP-dependent uptake of single-stranded DNA by duplex DNA, and the ATP-dependent hybridization of homologous single-stranded DNAs. It interacts with LexA causing its activation and leading to its autocatalytic cleavage. The sequence is that of Protein RecA from Mycoplasma mycoides.